Reading from the N-terminus, the 200-residue chain is Imidazole glycerol phosphate synthase subunit HisH (200 aa).

Residues 3–200 form the Glutamine amidotransferase type-1 domain; that stretch reads DVALIDAGGA…LHNFLEMSFP (198 aa). Cys78 acts as the Nucleophile in catalysis. Catalysis depends on residues His179 and Glu181.

Heterodimer of HisH and HisF.

The protein localises to the cytoplasm. The catalysed reaction is 5-[(5-phospho-1-deoxy-D-ribulos-1-ylimino)methylamino]-1-(5-phospho-beta-D-ribosyl)imidazole-4-carboxamide + L-glutamine = D-erythro-1-(imidazol-4-yl)glycerol 3-phosphate + 5-amino-1-(5-phospho-beta-D-ribosyl)imidazole-4-carboxamide + L-glutamate + H(+). It catalyses the reaction L-glutamine + H2O = L-glutamate + NH4(+). The protein operates within amino-acid biosynthesis; L-histidine biosynthesis; L-histidine from 5-phospho-alpha-D-ribose 1-diphosphate: step 5/9. Functionally, IGPS catalyzes the conversion of PRFAR and glutamine to IGP, AICAR and glutamate. The HisH subunit catalyzes the hydrolysis of glutamine to glutamate and ammonia as part of the synthesis of IGP and AICAR. The resulting ammonia molecule is channeled to the active site of HisF. This chain is Imidazole glycerol phosphate synthase subunit HisH, found in Xanthomonas oryzae pv. oryzae (strain MAFF 311018).